A 932-amino-acid chain; its full sequence is Protocadherin gamma-A9 (932 aa).

Positions 1 to 28 are cleaved as a signal peptide; sequence MAAPTKCQLRGRLVLLCSLLGMLWEARA. 6 consecutive Cadherin domains span residues 29–133, 134–242, 243–347, 348–452, 453–562, and 570–683; these read SQIR…APKF, QAES…APVF, AQRI…RPEV, TITS…PPAF, SQAS…APEI, and DGST…IPAD. Over 29–692 the chain is Extracellular; that stretch reads SQIRYSVPEE…DLEASDLTLY (664 aa). N-linked (GlcNAc...) asparagine glycans are attached at residues N47 and N127. Residues N389, N419, and N545 are each glycosylated (N-linked (GlcNAc...) asparagine). Residues 693 to 713 traverse the membrane as a helical segment; it reads LVVAVAVVSCVFLTFVITLLA. Over 714 to 932 the chain is Cytoplasmic; sequence LRLRHWHSSH…KKKSGKKEKK (219 aa). 2 disordered regions span residues 803–841 and 902–932; these read DTPLVPQAPPNTDWRFSQAQRPGTSGSQNGDDTGTWPNN and ATLTNAAGKRDGKAPAGGNGNKKKSGKKEKK. Residues 816–841 are compositionally biased toward polar residues; that stretch reads WRFSQAQRPGTSGSQNGDDTGTWPNN. Residues 922-932 are compositionally biased toward basic residues; it reads NKKKSGKKEKK.

Its subcellular location is the cell membrane. Potential calcium-dependent cell-adhesion protein. May be involved in the establishment and maintenance of specific neuronal connections in the brain. This is Protocadherin gamma-A9 (PCDHGA9) from Homo sapiens (Human).